Here is a 156-residue protein sequence, read N- to C-terminus: Small ribosomal subunit protein uS7 (156 aa).

The protein belongs to the universal ribosomal protein uS7 family. In terms of assembly, part of the 30S ribosomal subunit. Contacts proteins S9 and S11.

Functionally, one of the primary rRNA binding proteins, it binds directly to 16S rRNA where it nucleates assembly of the head domain of the 30S subunit. Is located at the subunit interface close to the decoding center, probably blocks exit of the E-site tRNA. This is Small ribosomal subunit protein uS7 from Deinococcus deserti (strain DSM 17065 / CIP 109153 / LMG 22923 / VCD115).